The chain runs to 169 residues: Probable actin-related protein 2/3 complex subunit 4 (169 aa).

Belongs to the ARPC4 family. In terms of assembly, component of the Arp2/3 complex, at least composed of arx-1, arx-2, arx-4 and arx-6.

It localises to the cytoplasm. It is found in the cytoskeleton. Its function is as follows. Functions as actin-binding component of the Arp2/3 complex which is involved in regulation of actin polymerization and together with an activating nucleation-promoting factor (NPF) mediates the formation of branched actin networks. Seems to contact the mother actin filament. Plays a role in time-dependent memory loss and the retention of conditioned behavior over time. The protein is Probable actin-related protein 2/3 complex subunit 4 of Caenorhabditis elegans.